A 130-amino-acid polypeptide reads, in one-letter code: Small ribosomal subunit protein uS9 (130 aa).

This sequence belongs to the universal ribosomal protein uS9 family.

This Burkholderia ambifaria (strain MC40-6) protein is Small ribosomal subunit protein uS9.